Here is a 519-residue protein sequence, read N- to C-terminus: Cytochrome P450 4A11 (519 aa).

A propeptide spanning residues 1-4 (MSVS) is cleaved from the precursor. Heme is bound at residue glutamate 321. Serine 440 carries the phosphoserine modification. Cysteine 457 is a binding site for heme.

Belongs to the cytochrome P450 family. Heme is required as a cofactor. In terms of tissue distribution, expressed in liver. Expressed in S2 and S3 segments of proximal tubules in cortex and outer medulla of kidney.

The protein resides in the endoplasmic reticulum membrane. It is found in the microsome membrane. The enzyme catalyses an organic molecule + reduced [NADPH--hemoprotein reductase] + O2 = an alcohol + oxidized [NADPH--hemoprotein reductase] + H2O + H(+). The catalysed reaction is an omega-methyl-long-chain fatty acid + reduced [NADPH--hemoprotein reductase] + O2 = an omega-hydroxy-long-chain fatty acid + oxidized [NADPH--hemoprotein reductase] + H2O + H(+). It catalyses the reaction dodecanoate + reduced [NADPH--hemoprotein reductase] + O2 = 12-hydroxydodecanoate + oxidized [NADPH--hemoprotein reductase] + H2O + H(+). It carries out the reaction tetradecanoate + reduced [NADPH--hemoprotein reductase] + O2 = 14-hydroxytetradecanoate + oxidized [NADPH--hemoprotein reductase] + H2O + H(+). The enzyme catalyses hexadecanoate + reduced [NADPH--hemoprotein reductase] + O2 = 16-hydroxyhexadecanoate + oxidized [NADPH--hemoprotein reductase] + H2O + H(+). The catalysed reaction is (9Z)-octadecenoate + reduced [NADPH--hemoprotein reductase] + O2 = 18-hydroxy-(9Z)-octadecenoate + oxidized [NADPH--hemoprotein reductase] + H2O + H(+). It catalyses the reaction (5Z,8Z,11Z,14Z)-eicosatetraenoate + reduced [NADPH--hemoprotein reductase] + O2 = 20-hydroxy-(5Z,8Z,11Z,14Z)-eicosatetraenoate + oxidized [NADPH--hemoprotein reductase] + H2O + H(+). It carries out the reaction 22-hydroxydocosanoate + reduced [NADPH--hemoprotein reductase] + O2 = 22-oxodocosanoate + oxidized [NADPH--hemoprotein reductase] + 2 H2O + H(+). The enzyme catalyses 22-oxodocosanoate + reduced [NADPH--hemoprotein reductase] + O2 = docosanedioate + oxidized [NADPH--hemoprotein reductase] + H2O + 2 H(+). The catalysed reaction is (9R,10S)-epoxy-octadecanoate + reduced [NADPH--hemoprotein reductase] + O2 = 18-hydroxy-(9R,10S)-epoxy-octadecanoate + oxidized [NADPH--hemoprotein reductase] + H2O + H(+). It catalyses the reaction 3-hydroxyhexadecanoate + reduced [NADPH--hemoprotein reductase] + O2 = 3,16-dihydroxyhexadecanoate + oxidized [NADPH--hemoprotein reductase] + H2O + H(+). It functions in the pathway lipid metabolism; arachidonate metabolism. The protein operates within lipid metabolism; oxylipin biosynthesis. With respect to regulation, activated by cytochrome b5. Functionally, a cytochrome P450 monooxygenase involved in the metabolism of fatty acids and their oxygenated derivatives (oxylipins). Mechanistically, uses molecular oxygen inserting one oxygen atom into a substrate, and reducing the second into a water molecule, with two electrons provided by NADPH via cytochrome P450 reductase (CPR; NADPH-ferrihemoprotein reductase). Catalyzes predominantly the oxidation of the terminal carbon (omega-oxidation) of saturated and unsaturated fatty acids, the catalytic efficiency decreasing in the following order: dodecanoic &gt; tetradecanoic &gt; (9Z)-octadecenoic &gt; (9Z,12Z)-octadecadienoic &gt; hexadecanoic acid. Acts as a major omega-hydroxylase for dodecanoic (lauric) acid in liver. Participates in omega-hydroxylation of (5Z,8Z,11Z,14Z)-eicosatetraenoic acid (arachidonate) to 20-hydroxyeicosatetraenoic acid (20-HETE), a signaling molecule acting both as vasoconstrictive and natriuretic with overall effect on arterial blood pressure. Can also catalyze the oxidation of the penultimate carbon (omega-1 oxidation) of fatty acids with lower efficiency. May contribute to the degradation of saturated very long-chain fatty acids (VLCFAs) such as docosanoic acid, by catalyzing successive omega-oxidations to the corresponding dicarboxylic acid, thereby initiating chain shortening. Omega-hydroxylates (9R,10S)-epoxy-octadecanoate stereoisomer. Plays a minor role in omega-oxidation of long-chain 3-hydroxy fatty acids. Has little activity toward prostaglandins A1 and E1. The polypeptide is Cytochrome P450 4A11 (Homo sapiens (Human)).